Consider the following 538-residue polypeptide: Xylosidase/arabinosidase 43B (538 aa).

E367 functions as the Proton donor in the catalytic mechanism.

This sequence belongs to the glycosyl hydrolase 43 family.

It catalyses the reaction Hydrolysis of (1-&gt;4)-beta-D-xylans, to remove successive D-xylose residues from the non-reducing termini.. The catalysed reaction is Hydrolysis of terminal non-reducing alpha-L-arabinofuranoside residues in alpha-L-arabinosides.. Activity is inhibited by Ag(+), Li(+), Cu(2+), Cr(3+), Co(3+), Ni(2+), Mg(2+), Zn(2+), EDTA, SDS and beta-mercaptoethanol; but not by Mn(2+), Pb(2+), Ca(2+) and Fe(3+). Its function is as follows. Bifunctional beta-xylosidase/alpha-L-arabinosidases with a low level of xylanase activity. Is most active on 4-nitrophenyl beta-D-xylopyranoside (pNPX) (defined as 100%), moderate on p-nitrophenyl-alpha-L-arabinofuranoside (pNPA) (56.6%), and weak on beechwood xylan (5.7%) and birchwood xylan (2.7%). Is able to attack xylooligosacchardies with degrees of polymerisation of 2-5, releasing the amounts of reducing sugars in the order of xylopentose &gt; xylotetraose &gt; xylotriose &gt; xylobiose, i.e. the rate of xylose released from xylooligosacchardies increased with the chain length. No activity was detected in the presence of carboxymethyl cellulose-sodium (CMC-Na), sugar beet arabinan, AZCL-arabinan (debranched), 4-nitrophenyl a-D - galactopyranoside, 2-nitrophenyl beta-D-galactopyranoside, and 4-nitrophenyl alpha-D-glucopyranoside. This chain is Xylosidase/arabinosidase 43B, found in Humicola insolens (Soft-rot fungus).